The chain runs to 760 residues: Protein HEADING DATE 3B (760 aa).

Composition is skewed to gly residues over residues 1-12 (MATRGGGGGGGG) and 60-70 (SGGGGGGGVGG). Disordered stretches follow at residues 1-120 (MATR…KINK), 144-169 (SRSTAEAPQRRAENTIKSSSGKRLAD), 236-262 (VKSRTPLKDKEMEAAQTSKNVEVEKSS), and 285-346 (TGII…IEET). Residues 71 to 87 (SPAHSTSAASQSQSQSQ) are compositionally biased toward low complexity. Polar residues predominate over residues 94–107 (SLFQPFNVPSNRPG). A compositionally biased stretch (basic and acidic residues) spans 108 to 120 (HSTEKINSDKINK). The span at 236–248 (VKSRTPLKDKEME) shows a compositional bias: basic and acidic residues. Residues 349 to 355 (KRKRLLE) carry the Nuclear localization signal motif. Disordered regions lie at residues 485-543 (LQQP…GVQL) and 707-760 (FPTV…QRDD). Polar residues-rich tracts occupy residues 511–522 (QRDQAATNGVSK), 531–543 (ASDNKQNNWGVQL), and 707–730 (FPTVSAQNNQPQPSYSSRDNQTNV).

Expressed in mesophyll cells of young leaves, anthers, stigmas and the top of lemmas.

It is found in the nucleus. In terms of biological role, involved in the regulation of flowering time under short day (SD) and long day (LD) conditions. Functions as a floral promoter by negatively regulating GHD7, a repressor of the photoperiodic control of flowering. Acts as a floral activator in the LD photoperiodic pathway. Involved in blue light-induced activation of EHD1 expression to promote flowering under SD conditions. The protein is Protein HEADING DATE 3B (HD3B) of Oryza sativa subsp. japonica (Rice).